A 159-amino-acid polypeptide reads, in one-letter code: ATP synthase subunit b 1 (159 aa).

The chain crosses the membrane as a helical span at residues 5–25; sequence FWAFIGLILFLALLFYFKVPA.

It belongs to the ATPase B chain family. F-type ATPases have 2 components, F(1) - the catalytic core - and F(0) - the membrane proton channel. F(1) has five subunits: alpha(3), beta(3), gamma(1), delta(1), epsilon(1). F(0) has three main subunits: a(1), b(2) and c(10-14). The alpha and beta chains form an alternating ring which encloses part of the gamma chain. F(1) is attached to F(0) by a central stalk formed by the gamma and epsilon chains, while a peripheral stalk is formed by the delta and b chains.

The protein resides in the cell inner membrane. In terms of biological role, f(1)F(0) ATP synthase produces ATP from ADP in the presence of a proton or sodium gradient. F-type ATPases consist of two structural domains, F(1) containing the extramembraneous catalytic core and F(0) containing the membrane proton channel, linked together by a central stalk and a peripheral stalk. During catalysis, ATP synthesis in the catalytic domain of F(1) is coupled via a rotary mechanism of the central stalk subunits to proton translocation. Functionally, component of the F(0) channel, it forms part of the peripheral stalk, linking F(1) to F(0). In Bartonella bacilliformis (strain ATCC 35685 / KC583 / Herrer 020/F12,63), this protein is ATP synthase subunit b 1.